Consider the following 414-residue polypeptide: Serine hydroxymethyltransferase (414 aa).

(6S)-5,6,7,8-tetrahydrofolate is bound by residues leucine 116 and 120–122 (GHL). Lysine 224 bears the N6-(pyridoxal phosphate)lysine mark. (6S)-5,6,7,8-tetrahydrofolate-binding positions include glutamate 240 and 348 to 350 (SPF).

The protein belongs to the SHMT family. In terms of assembly, homodimer. Requires pyridoxal 5'-phosphate as cofactor.

It is found in the cytoplasm. The catalysed reaction is (6R)-5,10-methylene-5,6,7,8-tetrahydrofolate + glycine + H2O = (6S)-5,6,7,8-tetrahydrofolate + L-serine. It participates in one-carbon metabolism; tetrahydrofolate interconversion. Its pathway is amino-acid biosynthesis; glycine biosynthesis; glycine from L-serine: step 1/1. Catalyzes the reversible interconversion of serine and glycine with tetrahydrofolate (THF) serving as the one-carbon carrier. This reaction serves as the major source of one-carbon groups required for the biosynthesis of purines, thymidylate, methionine, and other important biomolecules. Also exhibits THF-independent aldolase activity toward beta-hydroxyamino acids, producing glycine and aldehydes, via a retro-aldol mechanism. The sequence is that of Serine hydroxymethyltransferase from Campylobacter jejuni subsp. jejuni serotype O:23/36 (strain 81-176).